Consider the following 110-residue polypeptide: Bowman-Birk type proteinase inhibitor (110 aa).

A signal peptide spans 1-28; that stretch reads MVLMNKKAIMKLALMLFLLGFTANVVDA. Positions 29-42 are excised as a propeptide; the sequence is RFDSTSFITQVLSN. 7 cysteine pairs are disulfide-bonded: Cys50/Cys103, Cys51/Cys66, Cys54/Cys99, Cys56/Cys64, Cys73/Cys80, Cys77/Cys92, and Cys82/Cys90.

As to quaternary structure, monomer.

Inhibitor of trypsin and of chymotrypsin. This is Bowman-Birk type proteinase inhibitor from Lens culinaris (Lentil).